The primary structure comprises 396 residues: Argininosuccinate synthase (396 aa).

9–17 contributes to the ATP binding site; sequence AYSGGLDTS. Tyrosine 85 provides a ligand contact to L-citrulline. Residue glycine 115 coordinates ATP. Threonine 117, asparagine 121, and aspartate 122 together coordinate L-aspartate. Residue asparagine 121 coordinates L-citrulline. L-citrulline is bound by residues arginine 125, serine 173, glutamate 258, and tyrosine 270.

The protein belongs to the argininosuccinate synthase family. Type 1 subfamily. As to quaternary structure, homotetramer.

It is found in the cytoplasm. It carries out the reaction L-citrulline + L-aspartate + ATP = 2-(N(omega)-L-arginino)succinate + AMP + diphosphate + H(+). It functions in the pathway amino-acid biosynthesis; L-arginine biosynthesis; L-arginine from L-ornithine and carbamoyl phosphate: step 2/3. This is Argininosuccinate synthase from Streptococcus agalactiae serotype Ia (strain ATCC 27591 / A909 / CDC SS700).